Here is a 218-residue protein sequence, read N- to C-terminus: Hypoxanthine-guanine phosphoribosyltransferase (218 aa).

Lys69 is a binding site for GMP. Lys103 is subject to N6-acetyllysine. A Glycyl lysine isopeptide (Lys-Gly) (interchain with G-Cter in SUMO1); alternate cross-link involves residue Lys115. Lys115 participates in a covalent cross-link: Glycyl lysine isopeptide (Lys-Gly) (interchain with G-Cter in SUMO2); alternate. Residues 134 to 142 (EDIIDTGKT), Lys166, 186 to 188 (KFV), and Asp194 contribute to the GMP site. The active-site Proton acceptor is the Asp138. Thr142 is subject to Phosphothreonine. Asp194 lines the Mg(2+) pocket.

Belongs to the purine/pyrimidine phosphoribosyltransferase family. As to quaternary structure, homotetramer. Mg(2+) serves as cofactor.

It localises to the cytoplasm. It carries out the reaction IMP + diphosphate = hypoxanthine + 5-phospho-alpha-D-ribose 1-diphosphate. It catalyses the reaction GMP + diphosphate = guanine + 5-phospho-alpha-D-ribose 1-diphosphate. It participates in purine metabolism; IMP biosynthesis via salvage pathway; IMP from hypoxanthine: step 1/1. Converts guanine to guanosine monophosphate, and hypoxanthine to inosine monophosphate. Transfers the 5-phosphoribosyl group from 5-phosphoribosylpyrophosphate onto the purine. Plays a central role in the generation of purine nucleotides through the purine salvage pathway. This chain is Hypoxanthine-guanine phosphoribosyltransferase (Hprt1), found in Mus musculus (Mouse).